Reading from the N-terminus, the 142-residue chain is Protein CPn_0742/CP_0003/CPj0742/CpB0770 (142 aa).

The disordered stretch occupies residues 115-142; sequence LHPTKESKRPKQKLSSTKKNKKKNWIPL. The segment covering 124-142 has biased composition (basic residues); sequence PKQKLSSTKKNKKKNWIPL.

The protein belongs to the chlamydial CPn_0742/CT_635/TC_0003 family.

This is Protein CPn_0742/CP_0003/CPj0742/CpB0770 from Chlamydia pneumoniae (Chlamydophila pneumoniae).